We begin with the raw amino-acid sequence, 307 residues long: Ribonuclease Z (307 aa).

Positions 63, 65, 67, 68, 141, 212, and 270 each coordinate Zn(2+). Residue Asp-67 is the Proton acceptor of the active site.

This sequence belongs to the RNase Z family. In terms of assembly, homodimer. The cofactor is Zn(2+).

It carries out the reaction Endonucleolytic cleavage of RNA, removing extra 3' nucleotides from tRNA precursor, generating 3' termini of tRNAs. A 3'-hydroxy group is left at the tRNA terminus and a 5'-phosphoryl group is left at the trailer molecule.. Functionally, zinc phosphodiesterase, which displays some tRNA 3'-processing endonuclease activity. Probably involved in tRNA maturation, by removing a 3'-trailer from precursor tRNA. This Bacillus cereus (strain ATCC 14579 / DSM 31 / CCUG 7414 / JCM 2152 / NBRC 15305 / NCIMB 9373 / NCTC 2599 / NRRL B-3711) protein is Ribonuclease Z.